Consider the following 399-residue polypeptide: Phospholipase C (399 aa).

An N-terminal signal peptide occupies residues 1-28; sequence MNKKKILKFICSAVLSFTLFSGYKSYAW. Residues Trp28, His38, Asp83, His95, His153, Asp157, His163, His175, and Glu179 each contribute to the Zn(2+) site. One can recognise a Zn-dependent PLC domain in the interval 29-277; it reads DGKVDGTGTH…NEVSGTINTT (249 aa). Positions 275 to 282 are linker; that stretch reads NTTENSKI. One can recognise a PLAT domain in the interval 283–399; it reads NEIMVVIKTA…DNKTFYINNK (117 aa). The Ca(2+) site is built by Gly298, Thr299, Asp300, Asp320, Asn321, Gly323, Asn324, Asp325, and Asp363.

It belongs to the bacterial zinc-metallophospholipase C family. The cofactor is Ca(2+). Zn(2+) is required as a cofactor.

The protein resides in the secreted. It carries out the reaction a 1,2-diacyl-sn-glycero-3-phosphocholine + H2O = phosphocholine + a 1,2-diacyl-sn-glycerol + H(+). Functionally, bacterial hemolysins are exotoxins that attack blood cell membranes and cause cell rupture. Binds to eukaryotic membranes where it hydrolyzes phosphatidylcholine, sphingomyelin and phosphatidylethanolamine. The diacylglycerol produced can activate both the arachidonic acid pathway, leading to modulation of the inflammatory response cascade and thrombosis, and protein kinase C, leading to activation of eukaryotic phospholipases and further membrane damage. In Clostridium haemolyticum, this protein is Phospholipase C (plc).